A 92-amino-acid chain; its full sequence is Small ribosomal subunit protein uS19c (92 aa).

The protein belongs to the universal ribosomal protein uS19 family.

Its subcellular location is the plastid. It localises to the chloroplast. Its function is as follows. Protein S19 forms a complex with S13 that binds strongly to the 16S ribosomal RNA. The chain is Small ribosomal subunit protein uS19c from Dioscorea elephantipes (Elephant's foot yam).